The sequence spans 178 residues: ATP synthase subunit delta (178 aa).

It belongs to the ATPase delta chain family. As to quaternary structure, F-type ATPases have 2 components, F(1) - the catalytic core - and F(0) - the membrane proton channel. F(1) has five subunits: alpha(3), beta(3), gamma(1), delta(1), epsilon(1). F(0) has three main subunits: a(1), b(2) and c(10-14). The alpha and beta chains form an alternating ring which encloses part of the gamma chain. F(1) is attached to F(0) by a central stalk formed by the gamma and epsilon chains, while a peripheral stalk is formed by the delta and b chains.

It localises to the cell inner membrane. F(1)F(0) ATP synthase produces ATP from ADP in the presence of a proton or sodium gradient. F-type ATPases consist of two structural domains, F(1) containing the extramembraneous catalytic core and F(0) containing the membrane proton channel, linked together by a central stalk and a peripheral stalk. During catalysis, ATP synthesis in the catalytic domain of F(1) is coupled via a rotary mechanism of the central stalk subunits to proton translocation. Functionally, this protein is part of the stalk that links CF(0) to CF(1). It either transmits conformational changes from CF(0) to CF(1) or is implicated in proton conduction. This Acinetobacter baumannii (strain SDF) protein is ATP synthase subunit delta.